The chain runs to 312 residues: Coproporphyrin III ferrochelatase (312 aa).

Fe-coproporphyrin III contacts are provided by residues Tyr-13, Arg-30, 46–47 (RY), Ser-54, and Tyr-125. 2 residues coordinate Fe(2+): His-183 and Glu-264.

Belongs to the ferrochelatase family.

The protein localises to the cytoplasm. The catalysed reaction is Fe-coproporphyrin III + 2 H(+) = coproporphyrin III + Fe(2+). Its pathway is porphyrin-containing compound metabolism; protoheme biosynthesis. Its function is as follows. Involved in coproporphyrin-dependent heme b biosynthesis. Catalyzes the insertion of ferrous iron into coproporphyrin III to form Fe-coproporphyrin III. This Bacillus pumilus (strain SAFR-032) protein is Coproporphyrin III ferrochelatase.